A 348-amino-acid chain; its full sequence is Phospho-2-dehydro-3-deoxyheptonate aldolase, Trp-sensitive (348 aa).

The protein belongs to the class-I DAHP synthase family.

The enzyme catalyses D-erythrose 4-phosphate + phosphoenolpyruvate + H2O = 7-phospho-2-dehydro-3-deoxy-D-arabino-heptonate + phosphate. It functions in the pathway metabolic intermediate biosynthesis; chorismate biosynthesis; chorismate from D-erythrose 4-phosphate and phosphoenolpyruvate: step 1/7. Functionally, stereospecific condensation of phosphoenolpyruvate (PEP) and D-erythrose-4-phosphate (E4P) giving rise to 3-deoxy-D-arabino-heptulosonate-7-phosphate (DAHP). The chain is Phospho-2-dehydro-3-deoxyheptonate aldolase, Trp-sensitive (aroH) from Buchnera aphidicola subsp. Acyrthosiphon pisum (strain APS) (Acyrthosiphon pisum symbiotic bacterium).